The chain runs to 227 residues: Probable N-acetyltransferase family 8 member 5 (227 aa).

Transmembrane regions (helical) follow at residues 29 to 49, 53 to 73, and 201 to 221; these read IPAA…LFVM, IVLV…LLLL, and ISII…SFPS. The N-acetyltransferase domain occupies 69–213; that stretch reads FLLLLLRLLA…IKWLITFSII (145 aa).

It belongs to the camello family.

Its subcellular location is the membrane. Functionally, may play a role in regulation of gastrulation. The protein is Probable N-acetyltransferase family 8 member 5 of Mus musculus (Mouse).